A 150-amino-acid chain; its full sequence is Transcriptional repressor NrdR (150 aa).

The segment at 3 to 34 is a zinc-finger region; sequence CPFCGYEDTFVIDTREIEDQKVIRRRRECPNC. In terms of domain architecture, ATP-cone spans 49–139; it reads IMVIKKDGRR…VYQEFSSLEE (91 aa).

It belongs to the NrdR family. The cofactor is Zn(2+).

Negatively regulates transcription of bacterial ribonucleotide reductase nrd genes and operons by binding to NrdR-boxes. In Dictyoglomus turgidum (strain DSM 6724 / Z-1310), this protein is Transcriptional repressor NrdR.